A 192-amino-acid chain; its full sequence is Peptidyl-tRNA hydrolase (192 aa).

Y14 is a tRNA binding site. H19 (proton acceptor) is an active-site residue. Residues Y64, N66, and N112 each coordinate tRNA.

It belongs to the PTH family. In terms of assembly, monomer.

It localises to the cytoplasm. The catalysed reaction is an N-acyl-L-alpha-aminoacyl-tRNA + H2O = an N-acyl-L-amino acid + a tRNA + H(+). Functionally, hydrolyzes ribosome-free peptidyl-tRNAs (with 1 or more amino acids incorporated), which drop off the ribosome during protein synthesis, or as a result of ribosome stalling. Its function is as follows. Catalyzes the release of premature peptidyl moieties from peptidyl-tRNA molecules trapped in stalled 50S ribosomal subunits, and thus maintains levels of free tRNAs and 50S ribosomes. The chain is Peptidyl-tRNA hydrolase from Anaeromyxobacter dehalogenans (strain 2CP-1 / ATCC BAA-258).